Consider the following 121-residue polypeptide: Large ribosomal subunit protein bL20 (121 aa).

It belongs to the bacterial ribosomal protein bL20 family.

Binds directly to 23S ribosomal RNA and is necessary for the in vitro assembly process of the 50S ribosomal subunit. It is not involved in the protein synthesizing functions of that subunit. This chain is Large ribosomal subunit protein bL20, found in Chlamydia caviae (strain ATCC VR-813 / DSM 19441 / 03DC25 / GPIC) (Chlamydophila caviae).